The chain runs to 139 residues: ATP synthase epsilon chain (139 aa).

The interval 89–110 is disordered; the sequence is EARAEQARAEAEARRREAQSER.

Belongs to the ATPase epsilon chain family. As to quaternary structure, F-type ATPases have 2 components, CF(1) - the catalytic core - and CF(0) - the membrane proton channel. CF(1) has five subunits: alpha(3), beta(3), gamma(1), delta(1), epsilon(1). CF(0) has three main subunits: a, b and c.

It is found in the cell membrane. In terms of biological role, produces ATP from ADP in the presence of a proton gradient across the membrane. In Chloroflexus aurantiacus (strain ATCC 29366 / DSM 635 / J-10-fl), this protein is ATP synthase epsilon chain.